The chain runs to 708 residues: GID complex associated protein 12 (708 aa).

Low complexity predominate over residues 381–396; that stretch reads SSRRNSSFSTASSEPR. Residues 381–403 form a disordered region; the sequence is SSRRNSSFSTASSEPRPLSRRRR.

Interacts with core components of the GID/CTLH ubiquitin ligase complex. GID12 binds both the substrate receptor GID4 and the tip of GID5 in the scaffolding module, sealing GID4 onto the scaffold.

In terms of biological role, regulator of the GID E3 ligase complex. Modulates both assembly of the substrate receptor GID4 into the GID E3 ligase complex and its activity toward its substrates. GID12-binding remodels the N-degron binding pocket in the GID(SR4) complex, and could limit substrate accessibility of a bulky substrate to a ubiquitynation active site, thereby stabilizing gluconeogenic enzyme substrates. Involved in actin patch formation. This Saccharomyces cerevisiae (strain ATCC 204508 / S288c) (Baker's yeast) protein is GID complex associated protein 12.